The following is a 445-amino-acid chain: Enolase 1 (445 aa).

The substrate site is built by His164 and Glu173. Residue Glu216 is the Proton donor of the active site. Residues Asp251, Glu301, and Asp328 each contribute to the Mg(2+) site. 2 residues coordinate substrate: Glu301 and Asp328. The active-site Proton acceptor is Lys353. Substrate-binding positions include 380–383 (SHRS) and Lys404.

The protein belongs to the enolase family. As to quaternary structure, homodimer. Requires Mg(2+) as cofactor.

The protein localises to the cytoplasm. The catalysed reaction is (2R)-2-phosphoglycerate = phosphoenolpyruvate + H2O. The protein operates within carbohydrate degradation; glycolysis; pyruvate from D-glyceraldehyde 3-phosphate: step 4/5. The sequence is that of Enolase 1 (ENO1) from Hevea brasiliensis (Para rubber tree).